The sequence spans 253 residues: Imidazole glycerol phosphate synthase subunit HisF (253 aa).

Catalysis depends on residues aspartate 13 and aspartate 132.

This sequence belongs to the HisA/HisF family. As to quaternary structure, heterodimer of HisH and HisF.

The protein resides in the cytoplasm. It catalyses the reaction 5-[(5-phospho-1-deoxy-D-ribulos-1-ylimino)methylamino]-1-(5-phospho-beta-D-ribosyl)imidazole-4-carboxamide + L-glutamine = D-erythro-1-(imidazol-4-yl)glycerol 3-phosphate + 5-amino-1-(5-phospho-beta-D-ribosyl)imidazole-4-carboxamide + L-glutamate + H(+). It participates in amino-acid biosynthesis; L-histidine biosynthesis; L-histidine from 5-phospho-alpha-D-ribose 1-diphosphate: step 5/9. In terms of biological role, IGPS catalyzes the conversion of PRFAR and glutamine to IGP, AICAR and glutamate. The HisF subunit catalyzes the cyclization activity that produces IGP and AICAR from PRFAR using the ammonia provided by the HisH subunit. This chain is Imidazole glycerol phosphate synthase subunit HisF, found in Aliarcobacter butzleri (strain RM4018) (Arcobacter butzleri).